A 217-amino-acid chain; its full sequence is Probable GTP-binding protein EngB (217 aa).

One can recognise an EngB-type G domain in the interval 37 to 214 (AGVEVAFAGR…RAAMARLIGE (178 aa)). GTP-binding positions include 45 to 52 (GRSNVGKS), 72 to 76 (GRTQE), 92 to 95 (DMPG), 159 to 162 (TKAD), and 193 to 195 (TSS). The Mg(2+) site is built by Ser52 and Thr74.

The protein belongs to the TRAFAC class TrmE-Era-EngA-EngB-Septin-like GTPase superfamily. EngB GTPase family. The cofactor is Mg(2+).

Necessary for normal cell division and for the maintenance of normal septation. This Nitrobacter hamburgensis (strain DSM 10229 / NCIMB 13809 / X14) protein is Probable GTP-binding protein EngB.